Consider the following 134-residue polypeptide: uncharacterized protein (134 aa).

The signal sequence occupies residues 1–16 (MAKAVALLLAAIAASA).

This is an uncharacterized protein from Oryza sativa subsp. indica (Rice).